The primary structure comprises 229 residues: Aquaporin Z (229 aa).

Helical transmembrane passes span 8–28 and 33–53; these read FLGT…AAGF and IGFA…AYAI. The short motif at 62 to 64 is the NPA 1 element; sequence NPA. 3 helical membrane-spanning segments follow: residues 88-108, 129-149, and 158-178; these read VLGA…GAGF, LLAA…VIMG, and GFAP…SIPV. The NPA 2 motif lies at 184 to 186; that stretch reads NPA. Residues 192–212 traverse the membrane as a helical segment; that stretch reads ALFVGGWAVQQLWLFWLAPII.

Belongs to the MIP/aquaporin (TC 1.A.8) family. As to quaternary structure, homotetramer.

It is found in the cell inner membrane. It carries out the reaction H2O(in) = H2O(out). Its function is as follows. Channel that permits osmotically driven movement of water in both directions. It is involved in the osmoregulation and in the maintenance of cell turgor during volume expansion in rapidly growing cells. It mediates rapid entry or exit of water in response to abrupt changes in osmolarity. This is Aquaporin Z from Chromobacterium violaceum (strain ATCC 12472 / DSM 30191 / JCM 1249 / CCUG 213 / NBRC 12614 / NCIMB 9131 / NCTC 9757 / MK).